Here is a 215-residue protein sequence, read N- to C-terminus: Urease accessory protein UreG 2 (215 aa).

GTP is bound at residue 11 to 18; it reads GPVGSGKT.

This sequence belongs to the SIMIBI class G3E GTPase family. UreG subfamily. Homodimer. UreD, UreF and UreG form a complex that acts as a GTP-hydrolysis-dependent molecular chaperone, activating the urease apoprotein by helping to assemble the nickel containing metallocenter of UreC. The UreE protein probably delivers the nickel.

It is found in the cytoplasm. Facilitates the functional incorporation of the urease nickel metallocenter. This process requires GTP hydrolysis, probably effectuated by UreG. In Methylorubrum extorquens (strain PA1) (Methylobacterium extorquens), this protein is Urease accessory protein UreG 2.